A 596-amino-acid chain; its full sequence is Aspartate--tRNA(Asp/Asn) ligase (596 aa).

Glu-172 lines the L-aspartate pocket. Residues Gln-196–Lys-199 form an aspartate region. An L-aspartate-binding site is contributed by Arg-218. Residues Arg-218–Glu-220 and Gln-227 contribute to the ATP site. L-aspartate is bound at residue His-455. Glu-489 is a binding site for ATP. Arg-496 is a binding site for L-aspartate. Residue Gly-541–Arg-544 participates in ATP binding.

It belongs to the class-II aminoacyl-tRNA synthetase family. Type 1 subfamily. In terms of assembly, homodimer.

The protein resides in the cytoplasm. It carries out the reaction tRNA(Asx) + L-aspartate + ATP = L-aspartyl-tRNA(Asx) + AMP + diphosphate. Aspartyl-tRNA synthetase with relaxed tRNA specificity since it is able to aspartylate not only its cognate tRNA(Asp) but also tRNA(Asn). Reaction proceeds in two steps: L-aspartate is first activated by ATP to form Asp-AMP and then transferred to the acceptor end of tRNA(Asp/Asn). In Bordetella bronchiseptica (strain ATCC BAA-588 / NCTC 13252 / RB50) (Alcaligenes bronchisepticus), this protein is Aspartate--tRNA(Asp/Asn) ligase.